The primary structure comprises 979 residues: Zinc finger BED domain-containing protein 6 (979 aa).

Residues 1 to 89 (MSVCTLSVPV…ILAKKFSKDL (89 aa)) are required for nucleolar localization. The BED-type 1 zinc-finger motif lies at 130–187 (AKTSIVWHFFHVDPQYTWRAICNLCEKSVSRGKPGSHLGTSTLQRHLQARHSPHWTRA). Zn(2+) is bound by residues cysteine 151, cysteine 154, histidine 175, and histidine 180. The segment at 207–232 (PSSGSNGSFEYIPTDPLDDNRMGKKH) is disordered. A BED-type 2 zinc finger spans residues 264-321 (AKTSAVWNFFYTDPQHISRAVCNICKRSVSRGRPGSHLGTSTLQRHLQATHPIHWAVA). Residues cysteine 285, cysteine 288, histidine 309, and histidine 314 each coordinate Zn(2+). The disordered stretch occupies residues 333-383 (DEAETERSDLLSDTLHGEKSTGSQDLTAEDLSDSDSDEPMLEVENRSESPI). The span at 337–351 (TERSDLLSDTLHGEK) shows a compositional bias: basic and acidic residues. Residues 359–373 (TAEDLSDSDSDEPML) are compositionally biased toward acidic residues. Serine 381 is modified (phosphoserine). Positions 866-948 (VVDEYFKEKY…EQLMFLKMNL (83 aa)) are HATC (Hobo-Ac-Tam3) domain.

Expressed in pancreatic islet cells (at protein level).

It localises to the nucleus. It is found in the nucleolus. Its subcellular location is the cytoplasm. Transcriptional repressor which binds to the consensus sequence 5'-GCTCGC-3', transcription regulation may be tissue-specific. Regulates the expression of target genes such as: IGF2, PGAP6/TMEM8, ENHO, and PIANP. Acts as a transcriptional repressor of growth factor IGF2, thereby negatively regulating postnatal growth of muscles and internal organs, especially in females. Negatively regulates myoblast differentiation and myoblast mitochondrial activity via its regulation of IGF2 transcription. Negatively regulates the cell cycle of myoblasts, potentially via transcriptional regulation of the E2F family of transcription factors such as: E2F1 and E2F2. Positively regulates the cell cycle and survival of pancreatic beta cells. Binds to the CDH2 gene and may directly repress CDH2 transcription. Probably by controlling CDH2 expression, regulates pancreatic beta cell adhesion, and formation of cell-to-cell junctions between pancreatic beta cells and neural crest stem cells. May also play a role in embryonic beta cell differentiation. May play a role in insulin sensitivity and glucose clearance. In Homo sapiens (Human), this protein is Zinc finger BED domain-containing protein 6.